The primary structure comprises 251 residues: E3 ubiquitin-protein ligase MARCHF3 (251 aa).

The RING-CH-type zinc finger occupies 61–121; it reads QSFNDRPMCR…ELCHFRFSVE (61 aa). The Zn(2+) site is built by cysteine 69, cysteine 72, cysteine 85, cysteine 87, histidine 95, cysteine 98, cysteine 111, and cysteine 114. 2 consecutive transmembrane segments (helical) span residues 143–163 and 180–200; these read LFGD…SGWL and AVGL…WTLV.

It localises to the cytoplasmic vesicle membrane. The protein localises to the early endosome membrane. It carries out the reaction S-ubiquitinyl-[E2 ubiquitin-conjugating enzyme]-L-cysteine + [acceptor protein]-L-lysine = [E2 ubiquitin-conjugating enzyme]-L-cysteine + N(6)-ubiquitinyl-[acceptor protein]-L-lysine.. The protein operates within protein modification; protein ubiquitination. Functionally, E3 ubiquitin-protein ligase which may be involved in endosomal trafficking. E3 ubiquitin ligases accept ubiquitin from an E2 ubiquitin-conjugating enzyme in the form of a thioester and then directly transfer the ubiquitin to targeted substrates. In Xenopus tropicalis (Western clawed frog), this protein is E3 ubiquitin-protein ligase MARCHF3 (marchf3).